We begin with the raw amino-acid sequence, 520 residues long: T-box transcription factor TBX22 (520 aa).

The disordered stretch occupies residues 1–91; sequence MALSSRARAF…NSSESLEEKD (91 aa). Over residues 33–49 the composition is skewed to basic and acidic residues; that stretch reads PELREKKGGEEEEERRS. Residues 67 to 84 show a composition bias toward low complexity; the sequence is STSASSGCGSDSGYGNSS. Positions 96 to 283 form a DNA-binding region, T-box; sequence LQGSELWKRF…RNPFAKGFRD (188 aa).

As to expression, seems to be expressed at a low level.

It localises to the nucleus. In terms of biological role, probable transcriptional regulator involved in developmental processes. This is major determinant crucial to palatogenesis. The polypeptide is T-box transcription factor TBX22 (TBX22) (Homo sapiens (Human)).